We begin with the raw amino-acid sequence, 322 residues long: Pilin gene-inverting protein (322 aa).

Its function is as follows. May be the site-specific invertase required for pilin gene inversion. Moraxella can express either a Q or I pilin; the inversion of 2 kb of DNA determines which pilin is expressed. The polypeptide is Pilin gene-inverting protein (piv) (Moraxella bovis).